Here is a 379-residue protein sequence, read N- to C-terminus: Tryptophan 2,3-dioxygenase (379 aa).

Substrate is bound by residues 57 to 61 (FIITH) and Arg-128. His-312 provides a ligand contact to heme. Thr-327 is a substrate binding site.

The protein belongs to the tryptophan 2,3-dioxygenase family. In terms of assembly, homotetramer. Dimer of dimers. It depends on heme as a cofactor.

It catalyses the reaction L-tryptophan + O2 = N-formyl-L-kynurenine. It functions in the pathway amino-acid degradation; L-tryptophan degradation via kynurenine pathway; L-kynurenine from L-tryptophan: step 1/2. Its pathway is pigment biosynthesis; ommochrome biosynthesis. In terms of biological role, heme-dependent dioxygenase that catalyzes the oxidative cleavage of the L-tryptophan (L-Trp) pyrrole ring and converts L-tryptophan to N-formyl-L-kynurenine. Catalyzes the oxidative cleavage of the indole moiety. This Drosophila sechellia (Fruit fly) protein is Tryptophan 2,3-dioxygenase.